The chain runs to 115 residues: Large ribosomal subunit protein bL19 (115 aa).

This sequence belongs to the bacterial ribosomal protein bL19 family.

Its function is as follows. This protein is located at the 30S-50S ribosomal subunit interface and may play a role in the structure and function of the aminoacyl-tRNA binding site. This chain is Large ribosomal subunit protein bL19, found in Thermosipho africanus (strain TCF52B).